The sequence spans 201 residues: FMN reductase (NADH) RutF 1 (201 aa).

Over residues 167–195 (PRAPRSGSAPAEPARAARAVGARPAEGPA) the composition is skewed to low complexity. The interval 167 to 201 (PRAPRSGSAPAEPARAARAVGARPAEGPALALRSA) is disordered.

This sequence belongs to the non-flavoprotein flavin reductase family. RutF subfamily.

The catalysed reaction is FMNH2 + NAD(+) = FMN + NADH + 2 H(+). Catalyzes the reduction of FMN to FMNH2 which is used to reduce pyrimidine by RutA via the Rut pathway. This is FMN reductase (NADH) RutF 1 from Methylorubrum extorquens (strain CM4 / NCIMB 13688) (Methylobacterium extorquens).